Reading from the N-terminus, the 210-residue chain is Molybdenum cofactor guanylyltransferase (210 aa).

GTP contacts are provided by residues 9 to 11, lysine 21, aspartate 66, and aspartate 95; that span reads LAG. Aspartate 95 is a binding site for Mg(2+).

The protein belongs to the MobA family. Monomer. The cofactor is Mg(2+).

Its subcellular location is the cytoplasm. It catalyses the reaction Mo-molybdopterin + GTP + H(+) = Mo-molybdopterin guanine dinucleotide + diphosphate. Functionally, transfers a GMP moiety from GTP to Mo-molybdopterin (Mo-MPT) cofactor (Moco or molybdenum cofactor) to form Mo-molybdopterin guanine dinucleotide (Mo-MGD) cofactor. This Syntrophotalea carbinolica (strain DSM 2380 / NBRC 103641 / GraBd1) (Pelobacter carbinolicus) protein is Molybdenum cofactor guanylyltransferase.